A 365-amino-acid chain; its full sequence is Protein SGT1 homolog (365 aa).

Position 2 is an N-acetylalanine (Ala-2). TPR repeat units follow at residues 11-44 (SQRF…KPDD), 45-78 (AQYY…NPNN), and 79-112 (STAM…DIET). The region spanning 169-258 (QSKIKYDWYQ…PEAVRWEKLE (90 aa)) is the CS domain. Thr-265 carries the phosphothreonine modification. The SGS domain maps to 276 to 365 (LYPSSSPYTR…PPDDMEWKKY (90 aa)). Ser-281 is subject to Phosphoserine. Phosphothreonine is present on Thr-284. A Glycyl lysine isopeptide (Lys-Gly) (interchain with G-Cter in SUMO1); alternate cross-link involves residue Lys-295. Residue Lys-295 forms a Glycyl lysine isopeptide (Lys-Gly) (interchain with G-Cter in SUMO2); alternate linkage. At Ser-331 the chain carries Phosphoserine.

The protein belongs to the SGT1 family. In terms of assembly, probably associates with SCF (SKP1-CUL1-F-box protein) complex through interaction with SKP1. Interacts with S100A6. Interacts with HSP90. Post-translationally, phosphorylated at Ser-281 and Ser-331, dephosphorylation promotes nuclear translocation, most likely due to disruption of the SUGT1-HSP90 complex.

It is found in the cytoplasm. Its subcellular location is the nucleus. May play a role in ubiquitination and subsequent proteasomal degradation of target proteins. This Homo sapiens (Human) protein is Protein SGT1 homolog.